A 650-amino-acid polypeptide reads, in one-letter code: Macrolide export ATP-binding/permease protein MacB (650 aa).

The 237-residue stretch at 2 to 238 folds into the ABC transporter domain; sequence IDIKGIRKSY…PTTAQEKRQE (237 aa). An ATP-binding site is contributed by 38-45; it reads GPSGSGKS. 4 helical membrane-spanning segments follow: residues 267 to 287, 531 to 551, 580 to 600, and 610 to 630; these read GLSM…LALG, IAAI…LVSV, IVVS…FSLL, and VVSA…GIVF.

Belongs to the ABC transporter superfamily. Macrolide exporter (TC 3.A.1.122) family. As to quaternary structure, homodimer.

It is found in the cell inner membrane. Its function is as follows. Non-canonical ABC transporter that contains transmembrane domains (TMD), which form a pore in the inner membrane, and an ATP-binding domain (NBD), which is responsible for energy generation. Confers resistance against macrolides. This is Macrolide export ATP-binding/permease protein MacB from Bdellovibrio bacteriovorus (strain ATCC 15356 / DSM 50701 / NCIMB 9529 / HD100).